The chain runs to 164 residues: MEMTNAQRLILSNQYKMMTMLDPDNAERYRRLQTIIERGYGLQMRELDREFGQLTEETCRTVIDIMEMYHALHVSWTNLKDAAGIDERRVTFLGFDAATEARFLGYVRFMVNIEGRYSHFDAGTHGFNSQTPMWEKYQRMLSVWHACPRQYHLSSNEINQIINA.

This sequence belongs to the UPF0304 family.

This Klebsiella pneumoniae (strain 342) protein is UPF0304 protein KPK_1463.